The chain runs to 763 residues: Cadherin-like protein 26 (763 aa).

Positions 1-20 (MDTRGCAWLLLLLSLPQGQS) are cleaved as a signal peptide. Cadherin domains lie at 21–140 (HQPL…APQF), 141–250 (PEKE…MPTF), 251–371 (MEDR…PPAF), and 370–478 (AFHP…APTL). Residues 21 to 590 (HQPLHRSKRR…SECEEPSDTW (570 aa)) lie on the Extracellular side of the membrane. N-linked (GlcNAc...) asparagine glycosylation is found at Asn-56, Asn-60, and Asn-146. Residues Asn-394 and Asn-440 are each glycosylated (N-linked (GlcNAc...) asparagine). A helical transmembrane segment spans residues 591-611 (LLWWALSPVGAALMVLSAALL). The Cytoplasmic portion of the chain corresponds to 612–763 (CLLRCSCTFG…AMCFTSRVPS (152 aa)).

As to quaternary structure, homodimer. Component of a cadherin:catenin adhesion complex composed of at least of CDH26, beta-catenin/CTNNB1, alpha-catenin/CTNNA1 and p120 catenin/CTNND1. In terms of processing, N-glycosylated.

The protein localises to the cell membrane. In terms of biological role, cadherins are calcium-dependent cell adhesion proteins. They preferentially interact with themselves in a homophilic manner in connecting cells; cadherins may thus contribute to the sorting of heterogeneous cell types. Ligand for integrins alpha-E/beta-7, ITGAE:ITGAB7, alpha-4/beta-7, ITGA4:ITGAB7 and alpha-4/beta-1, ITGA4:ITGAB1 through which modulates CD4(+) T cells activation. The protein is Cadherin-like protein 26 (Cdh26) of Mus musculus (Mouse).